We begin with the raw amino-acid sequence, 640 residues long: Threonine--tRNA ligase (640 aa).

Positions 1–61 (MPTITLPDGS…THDATLQIIT (61 aa)) constitute a TGS domain. The tract at residues 242–533 (DHRKIGKQLD…LIEHYAGVFP (292 aa)) is catalytic. Residues Cys-333, His-384, and His-510 each contribute to the Zn(2+) site.

It belongs to the class-II aminoacyl-tRNA synthetase family. In terms of assembly, homodimer. Zn(2+) is required as a cofactor.

The protein localises to the cytoplasm. It catalyses the reaction tRNA(Thr) + L-threonine + ATP = L-threonyl-tRNA(Thr) + AMP + diphosphate + H(+). Catalyzes the attachment of threonine to tRNA(Thr) in a two-step reaction: L-threonine is first activated by ATP to form Thr-AMP and then transferred to the acceptor end of tRNA(Thr). Also edits incorrectly charged L-seryl-tRNA(Thr). The chain is Threonine--tRNA ligase from Pseudomonas putida (strain W619).